Reading from the N-terminus, the 338-residue chain is RNA 3'-terminal phosphate cyclase (338 aa).

Residues Q103 and 283 to 287 (YLADQ) contribute to the ATP site. H308 serves as the catalytic Tele-AMP-histidine intermediate.

This sequence belongs to the RNA 3'-terminal cyclase family. Type 1 subfamily.

The protein resides in the cytoplasm. It carries out the reaction a 3'-end 3'-phospho-ribonucleotide-RNA + ATP = a 3'-end 2',3'-cyclophospho-ribonucleotide-RNA + AMP + diphosphate. Its function is as follows. Catalyzes the conversion of 3'-phosphate to a 2',3'-cyclic phosphodiester at the end of RNA. The mechanism of action of the enzyme occurs in 3 steps: (A) adenylation of the enzyme by ATP; (B) transfer of adenylate to an RNA-N3'P to produce RNA-N3'PP5'A; (C) and attack of the adjacent 2'-hydroxyl on the 3'-phosphorus in the diester linkage to produce the cyclic end product. The biological role of this enzyme is unknown but it is likely to function in some aspects of cellular RNA processing. The sequence is that of RNA 3'-terminal phosphate cyclase from Escherichia coli O7:K1 (strain IAI39 / ExPEC).